A 555-amino-acid polypeptide reads, in one-letter code: Glypican-6 (555 aa).

Positions 1–23 (MPSWIGAVILPLLGLLLSLPAGA) are cleaved as a signal peptide. A compositionally biased stretch (low complexity) spans 348–357 (PALRSARSAP). The segment at 348–376 (PALRSARSAPENFNTRFRPYNPEERPTTA) is disordered. Serine 529 carries GPI-anchor amidated serine lipidation. Positions 530–555 (SAAQRGHSLLSWSLTCIVLALQRLCR) are cleaved as a propeptide — removed in mature form.

It belongs to the glypican family.

The protein resides in the cell membrane. Its subcellular location is the secreted. It is found in the extracellular space. In terms of biological role, cell surface proteoglycan that bears heparan sulfate. Putative cell surface coreceptor for growth factors, extracellular matrix proteins, proteases and anti-proteases. Enhances migration and invasion of cancer cells through WNT5A signaling. The chain is Glypican-6 (GPC6) from Pongo abelii (Sumatran orangutan).